The sequence spans 244 residues: tRNA pseudouridine synthase A (244 aa).

Asp-52 functions as the Nucleophile in the catalytic mechanism. Tyr-110 is a substrate binding site.

This sequence belongs to the tRNA pseudouridine synthase TruA family. In terms of assembly, homodimer.

The catalysed reaction is uridine(38/39/40) in tRNA = pseudouridine(38/39/40) in tRNA. Functionally, formation of pseudouridine at positions 38, 39 and 40 in the anticodon stem and loop of transfer RNAs. The sequence is that of tRNA pseudouridine synthase A from Brevibacillus brevis (strain 47 / JCM 6285 / NBRC 100599).